The following is a 178-amino-acid chain: CDP-diacylglycerol--glycerol-3-phosphate 3-phosphatidyltransferase (178 aa).

The next 4 membrane-spanning stretches (helical) occupy residues 28–48 (LSSL…GFFA), 88–108 (LIFF…IFLI), 125–145 (LFVS…VNFL), and 147–167 (ILTN…WVDY).

Belongs to the CDP-alcohol phosphatidyltransferase class-I family.

The protein resides in the cell membrane. The catalysed reaction is a CDP-1,2-diacyl-sn-glycerol + sn-glycerol 3-phosphate = a 1,2-diacyl-sn-glycero-3-phospho-(1'-sn-glycero-3'-phosphate) + CMP + H(+). It functions in the pathway phospholipid metabolism; phosphatidylglycerol biosynthesis; phosphatidylglycerol from CDP-diacylglycerol: step 1/2. Functionally, this protein catalyzes the committed step to the synthesis of the acidic phospholipids. This is CDP-diacylglycerol--glycerol-3-phosphate 3-phosphatidyltransferase (pgsA) from Aquifex aeolicus (strain VF5).